The primary structure comprises 393 residues: 8-amino-7-oxononanoate synthase (393 aa).

Arginine 18 is a binding site for substrate. Glycine 105 to tyrosine 106 contacts pyridoxal 5'-phosphate. A substrate-binding site is contributed by histidine 130. Pyridoxal 5'-phosphate-binding residues include serine 178, histidine 206, and threonine 234. N6-(pyridoxal phosphate)lysine is present on lysine 237. Threonine 353 provides a ligand contact to substrate.

The protein belongs to the class-II pyridoxal-phosphate-dependent aminotransferase family. BioF subfamily. Homodimer. Requires pyridoxal 5'-phosphate as cofactor.

It carries out the reaction 6-carboxyhexanoyl-[ACP] + L-alanine + H(+) = (8S)-8-amino-7-oxononanoate + holo-[ACP] + CO2. Its pathway is cofactor biosynthesis; biotin biosynthesis. Functionally, catalyzes the decarboxylative condensation of pimeloyl-[acyl-carrier protein] and L-alanine to produce 8-amino-7-oxononanoate (AON), [acyl-carrier protein], and carbon dioxide. The sequence is that of 8-amino-7-oxononanoate synthase from Geotalea daltonii (strain DSM 22248 / JCM 15807 / FRC-32) (Geobacter daltonii).